A 786-amino-acid polypeptide reads, in one-letter code: ATP-dependent RNA helicase SUPV3L1, mitochondrial (786 aa).

The N-terminal 22 residues, 1-22 (MSFSRALLWARLPAGRQAGHRA), are a transit peptide targeting the mitochondrion. Lys-99 carries the post-translational modification N6-acetyllysine. Positions 194 to 334 (DARAMQRKII…AIDLVMELMY (141 aa)) constitute a Helicase ATP-binding domain. 207-214 (GPTNSGKT) lines the ATP pocket. Lys-220 bears the N6-acetyllysine mark. The region spanning 353–518 (VLDHALESLD…GLHPTAEQIE (166 aa)) is the Helicase C-terminal domain. An interaction with LAMTOR5, important for protein stability region spans residues 650–786 (PDASLIRDLQ…RRKKKEPDSD (137 aa)). Disordered stretches follow at residues 690–730 (GFPS…DAGE) and 749–786 (KQLEKEWMTQQTEHNKEKTESGTHPKGTRRKKKEPDSD). A compositionally biased stretch (polar residues) spans 693-705 (SGSQSRLSGTLKS). Phosphoserine is present on Ser-725. Residues 749–771 (KQLEKEWMTQQTEHNKEKTESGT) are compositionally biased toward basic and acidic residues.

Belongs to the helicase family. As to quaternary structure, homodimer; in free form. Component of the mitochondrial degradosome (mtEXO) complex which is a heteropentamer containing 2 copies of SUPV3L1 and 3 copies of PNPT1. As part of mitochondrial degradosome complex, interacts with GRSF1 in a RNA-dependent manner; the interaction enhances the activity of the complex. Interacts with LAMTOR5/HBXIP, WRN and BLM. Mg(2+) serves as cofactor. Requires Mn(2+) as cofactor. Broadly expressed.

It is found in the nucleus. Its subcellular location is the mitochondrion matrix. It localises to the mitochondrion nucleoid. It catalyses the reaction ATP + H2O = ADP + phosphate + H(+). Its activity is regulated as follows. Helicase activity toward DNA substrate is inhibited by micromolar concentrations of 5,6-dichloro-1-(beta-D-ribofuranosyl)benzotriazole (DRBT) and 4,5,6,7-tetrabromobenzotriazole (TBBT). Helicase activity toward RNA substrate is inhibited by elevated concentrations of TBBT. Inhibited by some ring-expanded nucleoside analogs. Major helicase player in mitochondrial RNA metabolism. Component of the mitochondrial degradosome (mtEXO) complex, that degrades 3' overhang double-stranded RNA with a 3'-to-5' directionality in an ATP-dependent manner. Involved in the degradation of non-coding mitochondrial transcripts (MT-ncRNA) and tRNA-like molecules. ATPase and ATP-dependent multisubstrate helicase, able to unwind double-stranded (ds) DNA and RNA, and RNA/DNA heteroduplexes in the 5'-to-3' direction. Plays a role in the RNA surveillance system in mitochondria; regulates the stability of mature mRNAs, the removal of aberrantly formed mRNAs and the rapid degradation of non coding processing intermediates. Also implicated in recombination and chromatin maintenance pathways. May protect cells from apoptosis. Associates with mitochondrial DNA. The chain is ATP-dependent RNA helicase SUPV3L1, mitochondrial (SUPV3L1) from Homo sapiens (Human).